Reading from the N-terminus, the 77-residue chain is UPF0270 protein Spro_4577 (77 aa).

It belongs to the UPF0270 family.

The chain is UPF0270 protein Spro_4577 from Serratia proteamaculans (strain 568).